Consider the following 205-residue polypeptide: Small ribosomal subunit protein bS16 (205 aa).

Residues 110–205 (GEEVKIAVGT…ADDNEEPEDE (96 aa)) form a disordered region. Residues 123–132 (DPLERERERA) are compositionally biased toward basic and acidic residues. Residues 153–205 (EETEAEEAEDVETADAEDADAASETDEPEAAADEADETDASADADDNEEPEDE) show a composition bias toward acidic residues.

The protein belongs to the bacterial ribosomal protein bS16 family.

This Salinibacter ruber (strain DSM 13855 / M31) protein is Small ribosomal subunit protein bS16.